The sequence spans 273 residues: MKKKITRIAITGAMGRMGQVLIKEIQKNKNTVLTAALVKNNHPLIGQNIGEKIGIGKTSVSISSDINIEKNDFDVLIDFTKPSGTFYFLEQCYEFKKNMIIGTTGFSEKEIKTINSYAKKIALIKASNFSIGINLLYQLIQKTTKILGNTSDIDIIEYHHRNKIDIPSGTALSIGENISKVMNWELNKHSLYYTKGITKKIRETKKIGFSSIRSGNIIGKHTVLFSSSDEEIKITHSAFNRESFAKGAIEAAVWIHEKKHGLFNMNDILKDKF.

12-17 is a binding site for NAD(+); it reads GAMGRM. NADP(+) is bound at residue Lys-39. NAD(+) is bound by residues 102 to 104 and 126 to 129; these read GTT and ASNF. The active-site Proton donor/acceptor is the His-159. His-160 lines the (S)-2,3,4,5-tetrahydrodipicolinate pocket. Residue Lys-163 is the Proton donor of the active site. A (S)-2,3,4,5-tetrahydrodipicolinate-binding site is contributed by 169–170; the sequence is GT.

The protein belongs to the DapB family. In terms of assembly, homotetramer.

It is found in the cytoplasm. The enzyme catalyses (S)-2,3,4,5-tetrahydrodipicolinate + NAD(+) + H2O = (2S,4S)-4-hydroxy-2,3,4,5-tetrahydrodipicolinate + NADH + H(+). It carries out the reaction (S)-2,3,4,5-tetrahydrodipicolinate + NADP(+) + H2O = (2S,4S)-4-hydroxy-2,3,4,5-tetrahydrodipicolinate + NADPH + H(+). It participates in amino-acid biosynthesis; L-lysine biosynthesis via DAP pathway; (S)-tetrahydrodipicolinate from L-aspartate: step 4/4. Functionally, catalyzes the conversion of 4-hydroxy-tetrahydrodipicolinate (HTPA) to tetrahydrodipicolinate. The sequence is that of 4-hydroxy-tetrahydrodipicolinate reductase from Buchnera aphidicola subsp. Schizaphis graminum (strain Sg).